The chain runs to 1265 residues: MITSELSVLQDSTNESAVMHTDMTAVSADLSTELVEDLEVKGKRKRGRPGRPPSAIKKPRKTPGDRSRAEPGSRGRGRANGHPQQNGEGDPVTLFEVVKMGKSAMQAVVDDWIESYKQDRDIALLDLINFFIQCSGCKGTVRIEMFRNMQNAEIIRKMTEEFDEDSGDYPLTMPGPHWKKFRCNFCEFISVLIRQCQYSIIYDEYMMDTVISLLTGLSDSQVRAFRHTSTLAAMKLMTALVNVALNLSIHQDNTQRQYETERNKIINKRANERLELLLQKRKELQENQDEIENMMNSIFKGIFVHRYRDAIAEIRAICIEEIGVWMKMYSDAFLNDSYLKYVGWTLHDRQGEVRLKCLKALQSLYTNRELFPKLELFTNRFKDRIVSMTLDKEYDVAVEAIRLVTLILHGSEEALSNEDCENVYHLVYSAHRPVAVAAGEFLHKKLFSRHDPQAEEALAKRRGRSSPNGNLVKMLVLFFLESELHEHAAYLVDSLWESSQELLKDWECMTELLVEEPMQGEEVMSERQESALVELMVCTIRQAAEAHPPVGRGTGKRVLTAKERKTQLDDKTKLTEHFIVALPVLLSKYSADAEKVANLLQIPQYFDLELYSTGRMEKHLDSLLKQIRFVVEKHIESDVLEACSKTYSILCSEEYTIQNRVEIAHSQLIDELADRFSHAVEELLQEAEEADEDEIYNVMASLKRLTCFHNAHDLTKWDFFGNCYRLLRAGIEHEGMMEQIVVQALQCSHYSILWQLVKITEGNPSKEEMLALRKTVKSFLAVCQQCLSSMTTLVKEQAFMLLCDLLMIFSHQLTTGGRENLLLLVFNPDVGLQSELLSFVMDHVFIDQDDENQSMEGDEEDEANKIEALHKRRNLLASFCKLIIYDIVDMNAAADIFKHYMKYYNDYGDIIKETLSKTRQMDKIQCAKTLILSLQQLFNELVQEQGPNLDRTSAHVSGIKELARRFALTFGLDQIKTREAVATLHKDGIEFAFKYQNPKGPEYPPLNLAFLEVLSEFSSKLLRQDKKTVHSYLEKFLTDLMMERREDVWLPLISYRNSLVTGGDEDRLSVNSGGSNSKGSSVRSKKGRPPLHKKRVIEEESIDNSWVTRNDTIQTPGALTTPQLTSTVLRENPRQIPEQIPEQESEPSSEPDFLHSPQMQMSWLGQQKLEDLNRKDRTSMSYMKVRSGVRHAVRGLMEDDAEPIFEDVMMSSRGQLEDMNEEFEDTMVIDLPPSRNRRERAELRPDFFDSAAIIEDDSGFGMPMF.

Positions 1-16 (MITSELSVLQDSTNES) are enriched in polar residues. 2 disordered regions span residues 1-21 (MITSELSVLQDSTNESAVMHT) and 37-91 (DLEV…EGDP). Basic and acidic residues predominate over residues 62-73 (TPGDRSRAEPGS). Residues 303–388 (FVHRYRDAIA…NRFKDRIVSM (86 aa)) enclose the SCD domain. Disordered stretches follow at residues 1063-1097 (GDEDRLSVNSGGSNSKGSSVRSKKGRPPLHKKRVI) and 1111-1130 (DTIQTPGALTTPQLTSTVLR). The span at 1069–1082 (SVNSGGSNSKGSSV) shows a compositional bias: low complexity. Over residues 1083 to 1095 (RSKKGRPPLHKKR) the composition is skewed to basic residues. Polar residues predominate over residues 1111–1129 (DTIQTPGALTTPQLTSTVL).

It belongs to the SCC3 family. As to quaternary structure, interacts directly with RAD21 in cohesin complex. Cohesin complexes are composed of a heterodimer between and SMC3, which are attached via their hinge domain, and RAD21 which link them at their heads, and one STAG protein (STAG1 OR STAG2). In cohesin complexes, STAG1 is mutually exclusive with STAG2. In terms of processing, phosphorylated by PLK1. The large dissociation of cohesin from chromosome arms during prophase is partly due to its phosphorylation.

It is found in the nucleus. The protein resides in the chromosome. The protein localises to the centromere. Its function is as follows. Component of cohesin complex, a complex required for the cohesion of sister chromatids after DNA replication. The cohesin complex apparently forms a large proteinaceous ring within which sister chromatids can be trapped. At anaphase, the complex is cleaved and dissociates from chromatin, allowing sister chromatids to segregate. The cohesin complex may also play a role in spindle pole assembly during mitosis. This Xenopus laevis (African clawed frog) protein is Cohesin subunit SA-1 (stag1).